We begin with the raw amino-acid sequence, 476 residues long: Raffinose invertase (476 aa).

Residues 35–38 (WMND), Gln54, 97–98 (FS), 159–160 (RD), Glu214, and Trp297 contribute to the substrate site. Residue Asp38 is part of the active site.

It belongs to the glycosyl hydrolase 32 family. As to quaternary structure, homodimer.

The enzyme catalyses Hydrolysis of terminal non-reducing beta-D-fructofuranoside residues in beta-D-fructofuranosides.. Functionally, may prevent the potential hasard of excessive sucrose accumulation. The sequence is that of Raffinose invertase (rafD) from Escherichia coli.